Here is a 309-residue protein sequence, read N- to C-terminus: Hydroxyacylglutathione hydrolase, mitochondrial (309 aa).

Residues 1–24 constitute a mitochondrion transit peptide; the sequence is MVLGRGSLCLRSLSVLGAACARRG. Residue K90 is modified to N6-acetyllysine. Residues H103, H105, D107, and H108 each coordinate Zn(2+). Position 117 is an N6-acetyllysine (K117). 2 residues coordinate Zn(2+): H159 and D183. Substrate contacts are provided by residues 192-194 and 222-224; these read KFY and HEY. H222 lines the Zn(2+) pocket. K230 bears the N6-acetyllysine; alternate mark. At K230 the chain carries N6-succinyllysine; alternate. 298–301 lines the substrate pocket; the sequence is RREK.

The protein belongs to the metallo-beta-lactamase superfamily. Glyoxalase II family. In terms of assembly, monomer. Zn(2+) is required as a cofactor. In terms of tissue distribution, strongly expressed in testis, skeletal muscle and heart. Weakly expressed in placenta, pancreas, spleen and peripheral blood leukocytes.

It localises to the mitochondrion matrix. The protein resides in the cytoplasm. The enzyme catalyses an S-(2-hydroxyacyl)glutathione + H2O = a 2-hydroxy carboxylate + glutathione + H(+). It catalyses the reaction (R)-S-lactoylglutathione + H2O = (R)-lactate + glutathione + H(+). It participates in secondary metabolite metabolism; methylglyoxal degradation; (R)-lactate from methylglyoxal: step 2/2. Its function is as follows. Thiolesterase that catalyzes the hydrolysis of S-D-lactoyl-glutathione to form glutathione and D-lactic acid. This chain is Hydroxyacylglutathione hydrolase, mitochondrial (Hagh), found in Rattus norvegicus (Rat).